Reading from the N-terminus, the 130-residue chain is Small ribosomal subunit protein uS8 (130 aa).

This sequence belongs to the universal ribosomal protein uS8 family. In terms of assembly, part of the 30S ribosomal subunit. Contacts proteins S5 and S12.

In terms of biological role, one of the primary rRNA binding proteins, it binds directly to 16S rRNA central domain where it helps coordinate assembly of the platform of the 30S subunit. In Klebsiella pneumoniae (strain 342), this protein is Small ribosomal subunit protein uS8.